The primary structure comprises 190 residues: Crossover junction endodeoxyribonuclease RuvC (190 aa).

Residues aspartate 7, glutamate 68, and aspartate 141 contribute to the active site. The Mg(2+) site is built by aspartate 7, glutamate 68, and aspartate 141.

It belongs to the RuvC family. As to quaternary structure, homodimer which binds Holliday junction (HJ) DNA. The HJ becomes 2-fold symmetrical on binding to RuvC with unstacked arms; it has a different conformation from HJ DNA in complex with RuvA. In the full resolvosome a probable DNA-RuvA(4)-RuvB(12)-RuvC(2) complex forms which resolves the HJ. Mg(2+) serves as cofactor.

It localises to the cytoplasm. It catalyses the reaction Endonucleolytic cleavage at a junction such as a reciprocal single-stranded crossover between two homologous DNA duplexes (Holliday junction).. The RuvA-RuvB-RuvC complex processes Holliday junction (HJ) DNA during genetic recombination and DNA repair. Endonuclease that resolves HJ intermediates. Cleaves cruciform DNA by making single-stranded nicks across the HJ at symmetrical positions within the homologous arms, yielding a 5'-phosphate and a 3'-hydroxyl group; requires a central core of homology in the junction. The consensus cleavage sequence is 5'-(A/T)TT(C/G)-3'. Cleavage occurs on the 3'-side of the TT dinucleotide at the point of strand exchange. HJ branch migration catalyzed by RuvA-RuvB allows RuvC to scan DNA until it finds its consensus sequence, where it cleaves and resolves the cruciform DNA. This chain is Crossover junction endodeoxyribonuclease RuvC, found in Endomicrobium trichonymphae.